The sequence spans 323 residues: Zinc finger C2HC domain-containing protein 1A (323 aa).

A C2HC/C3H-type 1 zinc finger spans residues 14 to 43 (ELLPCKICGRTFFPVALKKHGPICQKTATK). 4 residues coordinate Zn(2+): Cys18, Cys21, His33, and Cys37. The tract at residues 42 to 81 (TKKRKTFDSSRQRAEGTDIPTVKPLKPRPEPPKKPSNWRR) is disordered. The span at 47–57 (TFDSSRQRAEG) shows a compositional bias: basic and acidic residues. The C2HC/C3H-type 2 zinc finger occupies 117 to 146 (DYIQCPYCQRRFNENAADRHINFCKEQAAR). Zn(2+) is bound by residues Cys121, Cys124, His136, and Cys140. Positions 149-258 (NKGKFSTDTK…NPASGVLTSK (110 aa)) are disordered. Over residues 177 to 197 (SPGTTSSGSSRLPQPSGTSKT) the composition is skewed to polar residues. The span at 198 to 214 (VVGAPSGKVSSVSSSSG) shows a compositional bias: low complexity. The residue at position 221 (Ser221) is a Phosphoserine. Thr242 is modified (phosphothreonine). Ser290 carries the phosphoserine modification.

It belongs to the ZC2HC1 family. Zn(2+) is required as a cofactor.

The sequence is that of Zinc finger C2HC domain-containing protein 1A (ZC2HC1A) from Bos taurus (Bovine).